A 640-amino-acid chain; its full sequence is Threonine--tRNA ligase (640 aa).

The TGS domain maps to Met1 to Thr61. The segment at Asp242–Pro533 is catalytic. Zn(2+)-binding residues include Cys333, His384, and His510.

It belongs to the class-II aminoacyl-tRNA synthetase family. Homodimer. The cofactor is Zn(2+).

It localises to the cytoplasm. The catalysed reaction is tRNA(Thr) + L-threonine + ATP = L-threonyl-tRNA(Thr) + AMP + diphosphate + H(+). Its function is as follows. Catalyzes the attachment of threonine to tRNA(Thr) in a two-step reaction: L-threonine is first activated by ATP to form Thr-AMP and then transferred to the acceptor end of tRNA(Thr). Also edits incorrectly charged L-seryl-tRNA(Thr). In Prochlorococcus marinus (strain MIT 9303), this protein is Threonine--tRNA ligase.